The primary structure comprises 644 residues: DNA mismatch repair protein MutL (644 aa).

2 disordered regions span residues 353–399 and 420–440; these read SESG…SQLT and GSMA…RARA. Residues 370–381 show a composition bias toward polar residues; sequence SPESKTHSTWNE. The span at 383–399 shows a compositional bias: basic and acidic residues; that stretch reads SRVDTSRVEISRDSQLT.

The protein belongs to the DNA mismatch repair MutL/HexB family.

Functionally, this protein is involved in the repair of mismatches in DNA. It is required for dam-dependent methyl-directed DNA mismatch repair. May act as a 'molecular matchmaker', a protein that promotes the formation of a stable complex between two or more DNA-binding proteins in an ATP-dependent manner without itself being part of a final effector complex. In Shewanella sp. (strain MR-4), this protein is DNA mismatch repair protein MutL.